We begin with the raw amino-acid sequence, 338 residues long: tRNA (cytosine(34)-C(5))-methyltransferase, mitochondrial (338 aa).

Residues C140–K146, E163, D194, and D212 each bind S-adenosyl-L-methionine. Residue C266 is the Nucleophile of the active site.

It belongs to the class I-like SAM-binding methyltransferase superfamily. RsmB/NOP family.

It is found in the mitochondrion matrix. It catalyses the reaction cytidine(34) in mitochondrial tRNA + S-adenosyl-L-methionine = 5-methylcytidine(34) in mitochondrial tRNA + S-adenosyl-L-homocysteine + H(+). Its function is as follows. Mitochondrial tRNA methyltransferase that mediates methylation of cytosine to 5-methylcytosine (m5C) at position 34 of mt-tRNA(Met). mt-tRNA(Met) methylation at cytosine(34) takes place at the wobble position of the anticodon and initiates the formation of 5-formylcytosine (f(5)c) at this position. mt-tRNA(Met) containing the f(5)c modification at the wobble position enables recognition of the AUA codon in addition to the AUG codon, expanding codon recognition in mitochondrial translation. In Bos taurus (Bovine), this protein is tRNA (cytosine(34)-C(5))-methyltransferase, mitochondrial.